The primary structure comprises 183 residues: Ubiquitin-conjugating enzyme E2 H (183 aa).

Residues 1–150 enclose the UBC core domain; that stretch reads MSSPSPGKRR…IKEYIQKYAT (150 aa). Position 60 is an N6-acetyllysine (Lys60). The active-site Glycyl thioester intermediate is the Cys87. Positions 152–183 are disordered; sequence EALKEQEEGTGDSSSESSMSDFSEDEAQDMEL. The span at 163–172 shows a compositional bias: low complexity; sequence DSSSESSMSD. The span at 173 to 183 shows a compositional bias: acidic residues; that stretch reads FSEDEAQDMEL.

Belongs to the ubiquitin-conjugating enzyme family. Interacts with MAEA and WDR26, components of the CTLH complex that contains GID4, RANBP9 and/or RANBP10, MKLN1, MAEA, RMND5A (or alternatively its paralog RMND5B), GID8, ARMC8, WDR26 and YPEL5. Autoubiquitinated in vitro in the presence of NEDD4L.

It catalyses the reaction S-ubiquitinyl-[E1 ubiquitin-activating enzyme]-L-cysteine + [E2 ubiquitin-conjugating enzyme]-L-cysteine = [E1 ubiquitin-activating enzyme]-L-cysteine + S-ubiquitinyl-[E2 ubiquitin-conjugating enzyme]-L-cysteine.. The enzyme catalyses S-ubiquitinyl-[E1 ubiquitin-activating enzyme]-L-cysteine + [acceptor protein]-L-lysine = [E1 ubiquitin-activating enzyme]-L-cysteine + N(6)-monoubiquitinyl-[acceptor protein]-L-lysine.. It functions in the pathway protein modification; protein ubiquitination. Functionally, accepts ubiquitin from the E1 complex and catalyzes its covalent attachment to other proteins. E2 ubiquitin conjugating enzyme that transfers ubiquitin to MAEA, a core component of the CTLH E3 ubiquitin-protein ligase complex. In vitro catalyzes 'Lys-11'- and 'Lys-48'-linked polyubiquitination. Capable, in vitro, to ubiquitinate histone H2A. The polypeptide is Ubiquitin-conjugating enzyme E2 H (UBE2H) (Homo sapiens (Human)).